Here is a 144-residue protein sequence, read N- to C-terminus: Ribosome-binding factor A (144 aa).

The disordered stretch occupies residues 120–144 (DKRRMAEAGREEDEAAPDDTTEDKA). Acidic residues predominate over residues 129 to 144 (REEDEAAPDDTTEDKA).

This sequence belongs to the RbfA family. Monomer. Binds 30S ribosomal subunits, but not 50S ribosomal subunits or 70S ribosomes.

Its subcellular location is the cytoplasm. One of several proteins that assist in the late maturation steps of the functional core of the 30S ribosomal subunit. Associates with free 30S ribosomal subunits (but not with 30S subunits that are part of 70S ribosomes or polysomes). Required for efficient processing of 16S rRNA. May interact with the 5'-terminal helix region of 16S rRNA. The protein is Ribosome-binding factor A of Aeromonas salmonicida (strain A449).